A 91-amino-acid chain; its full sequence is Putative methyltransferase YfdM (91 aa).

The protein is Putative methyltransferase YfdM (yfdM) of Escherichia coli (strain K12).